The chain runs to 476 residues: Arginine biosynthesis bifunctional protein ArgJ, mitochondrial (476 aa).

Substrate-binding residues include Thr193, Lys219, Thr237, Glu337, Asn471, and Ser476. The active-site Nucleophile is Thr237.

The protein belongs to the ArgJ family. As to quaternary structure, heterodimer of an alpha and a beta chain. In terms of processing, the alpha and beta chains are autoproteolytically processed from a single precursor protein within the mitochondrion.

It localises to the mitochondrion matrix. It carries out the reaction N(2)-acetyl-L-ornithine + L-glutamate = N-acetyl-L-glutamate + L-ornithine. It catalyses the reaction L-glutamate + acetyl-CoA = N-acetyl-L-glutamate + CoA + H(+). It functions in the pathway amino-acid biosynthesis; L-arginine biosynthesis; L-ornithine and N-acetyl-L-glutamate from L-glutamate and N(2)-acetyl-L-ornithine (cyclic): step 1/1. The protein operates within amino-acid biosynthesis; L-arginine biosynthesis; N(2)-acetyl-L-ornithine from L-glutamate: step 1/4. Its function is as follows. Catalyzes two activities which are involved in the cyclic version of arginine biosynthesis: the synthesis of acetylglutamate from glutamate and acetyl-CoA, and of ornithine by transacetylation between acetylornithine and glutamate. This chain is Arginine biosynthesis bifunctional protein ArgJ, mitochondrial, found in Cryptococcus neoformans var. neoformans serotype D (strain B-3501A) (Filobasidiella neoformans).